The chain runs to 600 residues: MCGIVGYIGQNDTKEILLTGLEKLEYRGYDSAGIATLNDNGVHVTKVKGRIATLREDVDTTIDSTMGIGHTRWATHGVPSVMNAHPHQSTSERFTIVHNGVIENYNDIKNEYLADVSFISETDTEVIVQLIEKLHEKYQDTKKAFSEAMSLLKGSYAIGLIDAEDSETLYVSKNKSPLLVGLGDGFNLVASDAMATLRETDQYLEIFDKEIVLVSRNYVEVQTLDGQVVERKPFTAEIDASDTEKGTYPHFMLKEIDEQPIVMRKIIQEYQNDNGQLKLDQDIRTAMKDADRIYIIAAGTSYHAGLVGKEFIEKLANIPVEVHVASEFSYNMPLLSEKPLFVFISQSGETADSRAVLVKIKELGHPALTLTNVPGSTLSREANYTMHLHAGPEIAVASTKAYTAQIAVLAILAVDTARVKGLELDFEPLQELAIVANAMEVLTDQKEELEQLARDYFGTTRNAFFIGRSTDYHVAQEAALKLKEISYIQAEGFAGGELKHGTIALIEEGTPVIALTTQENVNYSIRGNVQEVVARGANAMVVSMKGLEQDEDAFVIPHVHELLTPLASVIPMQLLAYYAALHRDCDVDKPRNLAKSVTVE.

Cys2 (nucleophile; for GATase activity) is an active-site residue. The Glutamine amidotransferase type-2 domain maps to 2 to 217 (CGIVGYIGQN…DKEIVLVSRN (216 aa)). SIS domains follow at residues 283-422 (IRTA…VKGL) and 452-590 (LARD…VDKP). The For Fru-6P isomerization activity role is filled by Lys595.

In terms of assembly, homodimer.

The protein resides in the cytoplasm. The enzyme catalyses D-fructose 6-phosphate + L-glutamine = D-glucosamine 6-phosphate + L-glutamate. In terms of biological role, catalyzes the first step in hexosamine metabolism, converting fructose-6P into glucosamine-6P using glutamine as a nitrogen source. The chain is Glutamine--fructose-6-phosphate aminotransferase [isomerizing] from Oceanobacillus iheyensis (strain DSM 14371 / CIP 107618 / JCM 11309 / KCTC 3954 / HTE831).